The primary structure comprises 309 residues: Aspartate carbamoyltransferase catalytic subunit (309 aa).

Residues Arg-57 and Thr-58 each coordinate carbamoyl phosphate. Lys-86 is a binding site for L-aspartate. Residues Arg-107, His-135, and Gln-138 each contribute to the carbamoyl phosphate site. 2 residues coordinate L-aspartate: Arg-168 and Arg-228. Positions 267 and 268 each coordinate carbamoyl phosphate.

The protein belongs to the aspartate/ornithine carbamoyltransferase superfamily. ATCase family. In terms of assembly, heterooligomer of catalytic and regulatory chains.

The catalysed reaction is carbamoyl phosphate + L-aspartate = N-carbamoyl-L-aspartate + phosphate + H(+). Its pathway is pyrimidine metabolism; UMP biosynthesis via de novo pathway; (S)-dihydroorotate from bicarbonate: step 2/3. Its function is as follows. Catalyzes the condensation of carbamoyl phosphate and aspartate to form carbamoyl aspartate and inorganic phosphate, the committed step in the de novo pyrimidine nucleotide biosynthesis pathway. The protein is Aspartate carbamoyltransferase catalytic subunit of Cenarchaeum symbiosum (strain A).